Reading from the N-terminus, the 467-residue chain is Light-independent protochlorophyllide reductase subunit N (467 aa).

Positions 23, 48, and 108 each coordinate [4Fe-4S] cluster.

It belongs to the BchN/ChlN family. Protochlorophyllide reductase is composed of three subunits; ChlL, ChlN and ChlB. Forms a heterotetramer of two ChlB and two ChlN subunits. The cofactor is [4Fe-4S] cluster.

The enzyme catalyses chlorophyllide a + oxidized 2[4Fe-4S]-[ferredoxin] + 2 ADP + 2 phosphate = protochlorophyllide a + reduced 2[4Fe-4S]-[ferredoxin] + 2 ATP + 2 H2O. It functions in the pathway porphyrin-containing compound metabolism; chlorophyll biosynthesis (light-independent). Functionally, component of the dark-operative protochlorophyllide reductase (DPOR) that uses Mg-ATP and reduced ferredoxin to reduce ring D of protochlorophyllide (Pchlide) to form chlorophyllide a (Chlide). This reaction is light-independent. The NB-protein (ChlN-ChlB) is the catalytic component of the complex. This is Light-independent protochlorophyllide reductase subunit N from Nostoc sp. (strain PCC 7120 / SAG 25.82 / UTEX 2576).